The primary structure comprises 120 residues: Acyl carrier protein, mitochondrial (120 aa).

Residues 43–117 (KEITDRVIGV…ETISYLRKTP (75 aa)) enclose the Carrier domain. At Ser-77 the chain carries O-(pantetheine 4'-phosphoryl)serine.

It belongs to the acyl carrier protein (ACP) family. Complex I is composed of about 45 different subunits. Post-translationally, 4'-phosphopantetheine is transferred from CoA to a specific serine of apo-ACP by acpS. This modification is essential for activity because fatty acids are bound in thioester linkage to the sulfhydryl of the prosthetic group.

The protein resides in the mitochondrion. The protein operates within lipid metabolism; fatty acid biosynthesis. Its function is as follows. Carrier of the growing fatty acid chain in fatty acid biosynthesis. May be involved in the synthesis of very-long-chain fatty acids. Accessory and non-catalytic subunit of the mitochondrial membrane respiratory chain NADH dehydrogenase (Complex I), which functions in the transfer of electrons from NADH to the respiratory chain. The sequence is that of Acyl carrier protein, mitochondrial (ndufab1) from Dictyostelium discoideum (Social amoeba).